The following is a 280-amino-acid chain: MLPLIKQEDIKPEPDFTIQYRNKIIDTAGCIVISDSEEEQGEEVETRGATASSPSTGSGTPRVTSPTHPLSQMNHPPLPDPLGRPDEDSSSSSSSCSSASDSESESEEMKCSSGGGASVTSSHHGRGGFGGAASSSLLSCGHQSSGGASTGPRKKKSKRISELDNEKVRNIMKDKNTPFCTPNVQTRRGRVKIDEVSRMFRNTNRSLEYKNLPFTIPSMHQVLDEAIKACKTMQVNNKGIQIIYTRNHEVKSEVDAVRCRLGTMCTWPSPLPSSWSTPCP.

The tract at residues 36-164 (SEEEQGEEVE…KKSKRISELD (129 aa)) is disordered. Composition is skewed to low complexity over residues 47–67 (RGAT…TSPT), 90–101 (SSSSSSCSSASD), and 132–147 (AASS…SSGG).

Its function is as follows. Activates the E1.7 promoter. This activation is augmented by the IE1 protein. It down-regulates the transcription of genes under the control of the major IE promoter. The sequence is that of 30 kDa immediate-early protein 2 (UL122) from Human cytomegalovirus (strain Towne) (HHV-5).